A 705-amino-acid polypeptide reads, in one-letter code: Elongation factor G (705 aa).

The 283-residue stretch at 8–290 folds into the tr-type G domain; sequence EKYRNIGICA…GVVEYLPAPN (283 aa). GTP is bound by residues 17-24, 88-92, and 142-145; these read AHVDAGKT, DTPGH, and NKMD.

It belongs to the TRAFAC class translation factor GTPase superfamily. Classic translation factor GTPase family. EF-G/EF-2 subfamily.

It is found in the cytoplasm. In terms of biological role, catalyzes the GTP-dependent ribosomal translocation step during translation elongation. During this step, the ribosome changes from the pre-translocational (PRE) to the post-translocational (POST) state as the newly formed A-site-bound peptidyl-tRNA and P-site-bound deacylated tRNA move to the P and E sites, respectively. Catalyzes the coordinated movement of the two tRNA molecules, the mRNA and conformational changes in the ribosome. The protein is Elongation factor G of Francisella philomiragia subsp. philomiragia (strain ATCC 25017 / CCUG 19701 / FSC 153 / O#319-036).